The primary structure comprises 400 residues: S-adenosylmethionine sensor upstream of mTORC1 (400 aa).

S-adenosyl-L-methionine-binding residues include arginine 99, glycine 168, aspartate 186, aspartate 198, phenylalanine 199, and serine 240.

This sequence belongs to the BMT2/SAMTOR family. In terms of assembly, interacts with the GATOR1 complex; interaction is disrupted when samtor binds S-adenosyl-L-methionine. Interacts with the KICSTOR complex; interaction is disrupted when samtor binds S-adenosyl-L-methionine.

S-adenosyl-L-methionine-binding protein that acts as an inhibitor of mTORC1 signaling via interaction with the GATOR1 and KICSTOR complexes. Acts as a sensor of S-adenosyl-L-methionine to signal methionine sufficiency to mTORC1: in presence of methionine, binds S-adenosyl-L-methionine, leading to disrupt interaction with the GATOR1 and KICSTOR complexes and promote mTORC1 signaling. Upon methionine starvation, S-adenosyl-L-methionine levels are reduced, thereby promoting the association with GATOR1 and KICSTOR, leading to inhibit mTORC1 signaling. Probably also acts as a S-adenosyl-L-methionine-dependent methyltransferase. This Xenopus laevis (African clawed frog) protein is S-adenosylmethionine sensor upstream of mTORC1.